The following is a 303-amino-acid chain: Probable cell division protein WhiA (303 aa).

A DNA-binding region (H-T-H motif) is located at residues Ser-272–Leu-303.

It belongs to the WhiA family.

Functionally, involved in cell division and chromosome segregation. This is Probable cell division protein WhiA from Streptococcus thermophilus (strain ATCC BAA-250 / LMG 18311).